A 75-amino-acid chain; its full sequence is Small ribosomal subunit protein bS18 (75 aa).

It belongs to the bacterial ribosomal protein bS18 family. Part of the 30S ribosomal subunit. Forms a tight heterodimer with protein bS6.

Its function is as follows. Binds as a heterodimer with protein bS6 to the central domain of the 16S rRNA, where it helps stabilize the platform of the 30S subunit. This chain is Small ribosomal subunit protein bS18, found in Aliivibrio fischeri (strain ATCC 700601 / ES114) (Vibrio fischeri).